The primary structure comprises 106 residues: Large ribosomal subunit protein uL24 (106 aa).

It belongs to the universal ribosomal protein uL24 family. In terms of assembly, part of the 50S ribosomal subunit.

Its function is as follows. One of two assembly initiator proteins, it binds directly to the 5'-end of the 23S rRNA, where it nucleates assembly of the 50S subunit. Functionally, one of the proteins that surrounds the polypeptide exit tunnel on the outside of the subunit. In Verminephrobacter eiseniae (strain EF01-2), this protein is Large ribosomal subunit protein uL24.